The chain runs to 446 residues: Na(+)-translocating NADH-quinone reductase subunit A (446 aa).

This sequence belongs to the NqrA family. As to quaternary structure, composed of six subunits; NqrA, NqrB, NqrC, NqrD, NqrE and NqrF.

It catalyses the reaction a ubiquinone + n Na(+)(in) + NADH + H(+) = a ubiquinol + n Na(+)(out) + NAD(+). Functionally, NQR complex catalyzes the reduction of ubiquinone-1 to ubiquinol by two successive reactions, coupled with the transport of Na(+) ions from the cytoplasm to the periplasm. NqrA to NqrE are probably involved in the second step, the conversion of ubisemiquinone to ubiquinol. The sequence is that of Na(+)-translocating NADH-quinone reductase subunit A from Histophilus somni (strain 2336) (Haemophilus somnus).